The following is a 101-amino-acid chain: Large ribosomal subunit protein uL23 (101 aa).

This sequence belongs to the universal ribosomal protein uL23 family. As to quaternary structure, part of the 50S ribosomal subunit. Contacts protein L29, and trigger factor when it is bound to the ribosome.

Its function is as follows. One of the early assembly proteins it binds 23S rRNA. One of the proteins that surrounds the polypeptide exit tunnel on the outside of the ribosome. Forms the main docking site for trigger factor binding to the ribosome. The sequence is that of Large ribosomal subunit protein uL23 from Trichodesmium erythraeum (strain IMS101).